We begin with the raw amino-acid sequence, 242 residues long: Small ribosomal subunit protein uS2 (242 aa).

The protein belongs to the universal ribosomal protein uS2 family.

The chain is Small ribosomal subunit protein uS2 from Colwellia psychrerythraea (strain 34H / ATCC BAA-681) (Vibrio psychroerythus).